A 143-amino-acid polypeptide reads, in one-letter code: Large-conductance mechanosensitive channel (143 aa).

The next 2 helical transmembrane spans lie at 19–39 (VGVI…ADVI) and 81–101 (GSFL…FLVV).

This sequence belongs to the MscL family. As to quaternary structure, homopentamer.

The protein resides in the cell inner membrane. Its function is as follows. Channel that opens in response to stretch forces in the membrane lipid bilayer. May participate in the regulation of osmotic pressure changes within the cell. The sequence is that of Large-conductance mechanosensitive channel from Rhodopseudomonas palustris (strain HaA2).